The following is a 559-amino-acid chain: 5'-AMP-activated protein kinase catalytic subunit alpha-1 (559 aa).

The Protein kinase domain occupies tyrosine 27–phenylalanine 279. Residue threonine 32 is modified to Phosphothreonine. ATP is bound by residues leucine 33–valine 41 and lysine 56. Aspartate 150 serves as the catalytic Proton acceptor. Threonine 183 is subject to Phosphothreonine; by LKB1 and CaMKK2. An AIS region spans residues glutamate 302–glutamate 381. A Phosphothreonine modification is found at threonine 355. Phosphoserine is present on serine 356. Residue serine 360 is modified to Phosphoserine; by ULK1. A Phosphothreonine; by ULK1 modification is found at threonine 368. Threonine 382 carries the phosphothreonine modification. Serine 397 carries the post-translational modification Phosphoserine; by ULK1. Serine 467 and serine 486 each carry phosphoserine. Residues lysine 485–arginine 505 are compositionally biased toward polar residues. The segment at lysine 485–alanine 536 is disordered. Phosphothreonine; by ULK1 is present on threonine 488. Position 490 is a phosphothreonine (threonine 490). Phosphoserine occurs at positions 496, 508, 524, and 527. Residues proline 516 to valine 535 are compositionally biased toward low complexity.

It belongs to the protein kinase superfamily. CAMK Ser/Thr protein kinase family. SNF1 subfamily. In terms of assembly, AMPK is a heterotrimer of an alpha catalytic subunit (PRKAA1 or PRKAA2), a beta (PRKAB1 or PRKAB2) and a gamma non-catalytic subunits (PRKAG1, PRKAG2 or PRKAG3). Interacts with FNIP1 and FNIP2. Mg(2+) serves as cofactor. In terms of processing, phosphorylated at Thr-183 by STK11/LKB1 in complex with STE20-related adapter-alpha (STRADA) pseudo kinase and CAB39. Also phosphorylated at Thr-183 by CAMKK2; triggered by a rise in intracellular calcium ions, without detectable changes in the AMP/ATP ratio. CAMKK1 can also phosphorylate Thr-183, but at a much lower level. Dephosphorylated by protein phosphatase 2A and 2C (PP2A and PP2C). Phosphorylated by ULK1 and ULK2; leading to negatively regulate AMPK activity and suggesting the existence of a regulatory feedback loop between ULK1, ULK2 and AMPK. Dephosphorylated by PPM1A and PPM1B. Ubiquitinated. Post-translationally, glycosylated; O-GlcNAcylated by OGT, promoting the AMP-activated protein kinase (AMPK) activity.

The protein resides in the cytoplasm. It localises to the nucleus. It carries out the reaction L-seryl-[protein] + ATP = O-phospho-L-seryl-[protein] + ADP + H(+). It catalyses the reaction L-threonyl-[protein] + ATP = O-phospho-L-threonyl-[protein] + ADP + H(+). The enzyme catalyses L-seryl-[acetyl-CoA carboxylase] + ATP = O-phospho-L-seryl-[acetyl-CoA carboxylase] + ADP + H(+). The catalysed reaction is L-seryl-[3-hydroxy-3-methylglutaryl-coenzyme A reductase] + ATP = O-phospho-L-seryl-[3-hydroxy-3-methylglutaryl-coenzyme A reductase] + ADP + H(+). It carries out the reaction L-seryl-[tau protein] + ATP = O-phospho-L-seryl-[tau protein] + ADP + H(+). It catalyses the reaction L-threonyl-[tau protein] + ATP = O-phospho-L-threonyl-[tau protein] + ADP + H(+). Its activity is regulated as follows. Activated by phosphorylation on Thr-183. Binding of AMP to non-catalytic gamma subunit (PRKAG1, PRKAG2 or PRKAG3) results in allosteric activation, inducing phosphorylation on Thr-183. AMP-binding to gamma subunit also sustains activity by preventing dephosphorylation of Thr-183. ADP also stimulates Thr-183 phosphorylation, without stimulating already phosphorylated AMPK. ATP promotes dephosphorylation of Thr-183, rendering the enzyme inactive. Under physiological conditions AMPK mainly exists in its inactive form in complex with ATP, which is much more abundant than AMP. Selectively inhibited by compound C (6-[4-(2-Piperidin-1-yl-ethoxy)-phenyl)]-3-pyridin-4-yl-pyyrazolo[1,5-a] pyrimidine. Activated by resveratrol, a natural polyphenol present in red wine, and S17834, a synthetic polyphenol. In terms of biological role, catalytic subunit of AMP-activated protein kinase (AMPK), an energy sensor protein kinase that plays a key role in regulating cellular energy metabolism. In response to reduction of intracellular ATP levels, AMPK activates energy-producing pathways and inhibits energy-consuming processes: inhibits protein, carbohydrate and lipid biosynthesis, as well as cell growth and proliferation. AMPK acts via direct phosphorylation of metabolic enzymes, and by longer-term effects via phosphorylation of transcription regulators. Regulates lipid synthesis by phosphorylating and inactivating lipid metabolic enzymes such as ACACA, ACACB, GYS1, HMGCR and LIPE; regulates fatty acid and cholesterol synthesis by phosphorylating acetyl-CoA carboxylase (ACACA and ACACB) and hormone-sensitive lipase (LIPE) enzymes, respectively. Promotes lipolysis of lipid droplets by mediating phosphorylation of isoform 1 of CHKA (CHKalpha2). Regulates insulin-signaling and glycolysis by phosphorylating IRS1, PFKFB2 and PFKFB3. AMPK stimulates glucose uptake in muscle by increasing the translocation of the glucose transporter SLC2A4/GLUT4 to the plasma membrane, possibly by mediating phosphorylation of TBC1D4/AS160. Regulates transcription and chromatin structure by phosphorylating transcription regulators involved in energy metabolism such as CRTC2/TORC2, FOXO3, histone H2B, HDAC5, MEF2C, MLXIPL/ChREBP, EP300, HNF4A, p53/TP53, SREBF1, SREBF2 and PPARGC1A. Acts as a key regulator of glucose homeostasis in liver by phosphorylating CRTC2/TORC2, leading to CRTC2/TORC2 sequestration in the cytoplasm. In response to stress, phosphorylates 'Ser-36' of histone H2B (H2BS36ph), leading to promote transcription. Acts as a key regulator of cell growth and proliferation by phosphorylating FNIP1, TSC2, RPTOR, WDR24 and ATG1/ULK1: in response to nutrient limitation, negatively regulates the mTORC1 complex by phosphorylating RPTOR component of the mTORC1 complex and by phosphorylating and activating TSC2. Also phosphorylates and inhibits GATOR2 subunit WDR24 in response to nutrient limitation, leading to suppress glucose-mediated mTORC1 activation. In response to energetic stress, phosphorylates FNIP1, inactivating the non-canonical mTORC1 signaling, thereby promoting nuclear translocation of TFEB and TFE3, and inducing transcription of lysosomal or autophagy genes. In response to nutrient limitation, promotes autophagy by phosphorylating and activating ATG1/ULK1. In that process, it also activates WDR45/WIPI4. Phosphorylates CASP6, thereby preventing its autoprocessing and subsequent activation. In response to nutrient limitation, phosphorylates transcription factor FOXO3 promoting FOXO3 mitochondrial import. Also acts as a regulator of cellular polarity by remodeling the actin cytoskeleton; probably by indirectly activating myosin. AMPK also acts as a regulator of circadian rhythm by mediating phosphorylation of CRY1, leading to destabilize it. May regulate the Wnt signaling pathway by phosphorylating CTNNB1, leading to stabilize it. Also has tau-protein kinase activity: in response to amyloid beta A4 protein (APP) exposure, activated by CAMKK2, leading to phosphorylation of MAPT/TAU; however the relevance of such data remains unclear in vivo. Also phosphorylates CFTR, EEF2K, KLC1, NOS3 and SLC12A1. Regulates hepatic lipogenesis. Activated via SIRT3, represses sterol regulatory element-binding protein (SREBP) transcriptional activities and ATP-consuming lipogenesis to restore cellular energy balance. Upon stress, regulates mitochondrial fragmentation through phosphorylation of MTFR1L. This chain is 5'-AMP-activated protein kinase catalytic subunit alpha-1 (Prkaa1), found in Mus musculus (Mouse).